The sequence spans 1258 residues: Structural polyprotein (1258 aa).

A host transcription inhibition region spans residues 41–75; that stretch reads PQAQQMQQLIAAVNTLAIRQNGTRTPGQQRRKRQP. Residues 59-114 form a disordered region; it reads RQNGTRTPGQQRRKRQPNKPKRKQTPPKKQNPAKTKNKQKPQPPKPKKRKPGKRER. A Nuclear localization signal motif is present at residues 68-109; sequence QQRRKRQPNKPKRKQTPPKKQNPAKTKNKQKPQPPKPKKRKP. Basic residues-rich tracts occupy residues 69–84 and 93–114; these read QRRK…KQTP and TKNK…KRER. The segment at 96–124 is binding to the viral RNA; it reads KQKPQPPKPKKRKPGKRERKCMKIENDCI. Residues 109 to 123 form a ribosome-binding region; the sequence is PGKRERKCMKIENDC. A disulfide bond links Cys123 and Cys138. The Peptidase S3 domain maps to 123–271; the sequence is CIFEVKLEGK…RITPEGTEEW (149 aa). His149 serves as the catalytic Charge relay system. The Nuclear export signal signature appears at 154-164; it reads IDNPDLAKLAF. The tract at residues 165–170 is interaction with spike glycoprotein E2; the sequence is KKSSKY. Asp171 (charge relay system) is an active-site residue. Residues 193–203 form a dimerization of the capsid protein region; sequence PEGHYNWHHGA. Catalysis depends on Ser223, which acts as the Charge relay system. The dimerization of the capsid protein stretch occupies residues 229 to 233; that stretch reads DNKGR. The interval 272-284 is functions as an uncleaved signal peptide for the precursor of protein E3/E2; that stretch reads TALVTTACILSNL. 9 disulfide bridges follow: Cys279/Cys288, Cys293/Cys297, Cys296/Cys328, Cys356/Cys462, Cys359/Cys365, Cys428/Cys442, Cys490/Cys601, Cys538/Cys562, and Cys540/Cys557. The N-linked (GlcNAc...) asparagine; by host glycan is linked to Asn283. The Extracellular portion of the chain corresponds to 338-696; that stretch reads GLTEDYKAYK…PHEIFSYYYG (359 aa). Interaction with host Mxra8 receptor regions lie at residues 363 to 366 and 399 to 401; these read QFCY and HSW. Positions 521–524 are interaction with host Mxra8 receptor; it reads TGNK. An N-linked (GlcNAc...) asparagine; by host glycan is attached at Asn537. Positions 553–559 are interaction with host Mxra8 receptor; that stretch reads EFDNCEV. Asn598 carries an N-linked (GlcNAc...) asparagine; by host glycan. A helical membrane pass occupies residues 697 to 717; that stretch reads LYPATTVAVCVGLACVILLAL. Over 718 to 758 the chain is Cytoplasmic; the sequence is SASCCLCVSARNKCLTPYALTPGAVVPCTLSLLCCAPRAKA. The segment at 726-730 is interaction with the capsid protein; the sequence is SARNK. 3 S-palmitoyl cysteine; by host lipidation sites follow: Cys731, Cys751, and Cys752. The interval 731-751 is transient transmembrane before p62-6K protein processing; the sequence is CLTPYALTPGAVVPCTLSLLC. The cysteines at positions 731 and 752 are disulfide-linked. The Extracellular segment spans residues 759-773; sequence ATFAETAAYLWAENQ. Residues 774–794 form a helical membrane-spanning segment; sequence TVFWMQFAIPVACFMIVTYCL. The Cytoplasmic segment spans residues 795–796; it reads RH. A helical transmembrane segment spans residues 797 to 817; the sequence is LMLCCRTASFLVAVSLGMGAT. Extracellular-side segments run 818–819 and 820–1234; these read QA and YEHS…HTMG. 4 disulfides stabilise this stretch: Cys868–Cys933, Cys881–Cys913, Cys882–Cys915, and Cys887–Cys897. Residues 903 to 920 are E1 fusion peptide loop; the sequence is VYPFLWGGAYCFCDSENT. N-linked (GlcNAc...) asparagine; by host glycans are attached at residues Asn960 and Asn1089. Disulfide bonds link Cys1078/Cys1090, Cys1120/Cys1195, Cys1125/Cys1199, and Cys1147/Cys1189. Residues 1235 to 1255 form a helical membrane-spanning segment; sequence GATVVIAIGITIFLIVTCIAF. Cys1252 carries S-palmitoyl cysteine; by host lipidation. The Cytoplasmic segment spans residues 1256 to 1258; it reads SRH.

As to quaternary structure, homodimer. Homomultimer. Interacts with host karyopherin KPNA4; this interaction allows the nuclear import of the viral capsid protein. Interacts with spike glycoprotein E2. Interacts with host IRAK1; the interaction leads to inhibition of IRAK1-dependent signaling. In terms of assembly, the precursor of protein E3/E2 and E1 form a heterodimer shortly after synthesis. The precursor of protein E3/E2 and E1 form a heterodimer shortly after synthesis. Processing of the precursor of protein E3/E2 into E2 and E3 results in a heterodimer of the spike glycoproteins E2 and E1. Spike at virion surface are constituted of a trimer of E2-E1 heterodimers. After target cell attachment and endocytosis, E1 change conformation to form homotrimers. Interacts with 6K protein. As to quaternary structure, interacts with spike glycoprotein E1. Processing of the precursor of protein E3/E2 into E2 and E3 results in a heterodimer of the spike glycoproteins E2 and E1. Spike at virion surface are constituted of a trimer of E2-E1 heterodimers. Interacts with 6K protein. Interacts with host MXRA8; this interaction mediates virus entry. In terms of assembly, oligomer. Interacts with spike glycoprotein E1. Interacts with spike glycoprotein E2. In terms of processing, structural polyprotein: Specific enzymatic cleavages in vivo yield mature proteins. Capsid protein is auto-cleaved during polyprotein translation, unmasking a signal peptide at the N-terminus of the precursor of E3/E2. The remaining polyprotein is then targeted to the host endoplasmic reticulum, where host signal peptidase cleaves it into pE2, 6K and E1 proteins. pE2 is further processed to mature E3 and E2 by host furin in trans-Golgi vesicle. Post-translationally, palmitoylated via thioester bonds. These palmitoylations may induce disruption of the C-terminus transmembrane. This would result in the reorientation of E2 C-terminus from lumenal to cytoplasmic side. N-glycosylated. In terms of processing, palmitoylated via thioester bonds.

Its subcellular location is the virion. It localises to the host cytoplasm. It is found in the host cell membrane. The protein localises to the host nucleus. The protein resides in the virion membrane. Its subcellular location is the host Golgi apparatus. It localises to the host trans-Golgi network. It is found in the host endoplasmic reticulum. It catalyses the reaction Autocatalytic release of the core protein from the N-terminus of the togavirus structural polyprotein by hydrolysis of a -Trp-|-Ser- bond.. Its function is as follows. Forms an icosahedral capsid with a T=4 symmetry composed of 240 copies of the capsid protein surrounded by a lipid membrane through which penetrate 80 spikes composed of trimers of E1-E2 heterodimers. The capsid protein binds to the viral RNA genome at a site adjacent to a ribosome binding site for viral genome translation following genome release. Possesses a protease activity that results in its autocatalytic cleavage from the nascent structural protein. Following its self-cleavage, the capsid protein transiently associates with ribosomes, and within several minutes the protein binds to viral RNA and rapidly assembles into icosahedric core particles. The resulting nucleocapsid eventually associates with the cytoplasmic domain of the spike glycoprotein E2 at the cell membrane, leading to budding and formation of mature virions. In case of infection, new virions attach to target cells and after clathrin-mediated endocytosis their membrane fuses with the host endosomal membrane. This leads to the release of the nucleocapsid into the cytoplasm, followed by an uncoating event necessary for the genomic RNA to become accessible. The uncoating might be triggered by the interaction of capsid proteins with ribosomes. Binding of ribosomes would release the genomic RNA since the same region is genomic RNA-binding and ribosome-binding. Specifically inhibits interleukin-1 receptor-associated kinase 1/IRAK1-dependent signaling during viral entry, representing a means by which the alphaviruses may evade innate immune detection and activation prior to viral gene expression. Functionally, provides the signal sequence for the translocation of the precursor of protein E3/E2 to the host endoplasmic reticulum. Furin-cleaved E3 remains associated with spike glycoprotein E1 and mediates pH protection of the latter during the transport via the secretory pathway. After virion release from the host cell, the assembly protein E3 is gradually released in the extracellular space. In terms of biological role, plays a role in viral attachment to target host cell, by binding to the cell receptor MXRA8. Synthesized as a p62 precursor which is processed by furin at the cell membrane just before virion budding, giving rise to E2-E1 heterodimer. The p62-E1 heterodimer is stable, whereas E2-E1 is unstable and dissociate at low pH. p62 is processed at the last step, presumably to avoid E1 fusion activation before its final export to cell surface. E2 C-terminus contains a transitory transmembrane that would be disrupted by palmitoylation, resulting in reorientation of the C-terminal tail from lumenal to cytoplasmic side. This step is critical since E2 C-terminus is involved in budding by interacting with capsid proteins. This release of E2 C-terminus in cytoplasm occurs lately in protein export, and precludes premature assembly of particles at the endoplasmic reticulum membrane. Acts as a viroporin that participates in virus glycoprotein processing and transport to the plasma membrane, cell permeabilization and budding of viral particles. Disrupts the calcium homeostasis of the cell, probably at the endoplasmic reticulum level. This leads to cytoplasmic calcium elevation. Because of its lipophilic properties, the 6K protein is postulated to influence the selection of lipids that interact with the transmembrane domains of the glycoproteins, which, in turn, affects the deformability of the bilayer required for the extreme curvature that occurs as budding proceeds. Present in low amount in virions, about 3% compared to viral glycoproteins. Its function is as follows. Class II viral fusion protein. Fusion activity is inactive as long as E1 is bound to E2 in mature virion. After virus attachment to target cell and endocytosis, acidification of the endosome induce dissociation of E1/E2 heterodimer and concomitant trimerization of the E1 subunits. This E1 trimer is fusion active, and promotes release of viral nucleocapsid in cytoplasm after endosome and viral membrane fusion. Efficient fusion requires the presence of cholesterol and sphingolipid in the target membrane. The polypeptide is Structural polyprotein (Middelburg virus).